The chain runs to 996 residues: Disease resistance protein RGA4 (996 aa).

The structured coiled coil (CC) domain stretch occupies residues 1–176 (MEAALLSGFI…PRIHEADLVG (176 aa)). A coiled-coil region spans residues 111–138 (NLQLAQQLQRLKRMAAEANQRKQRYTAA). An NB-ARC domain is found at 180–462 (DREELLEQLA…RWLAEGFVEP (283 aa)). 11 LRR repeats span residues 481-503 (RNII…TYGM), 504-528 (MREF…KFVP), 529-549 (KYVR…NFNG), 577-599 (LRVL…ICNL), 600-621 (VLLK…IAKL), 622-644 (KDLE…VFGL), 698-722 (MNKL…DLRE), 759-781 (PCYL…VTSL), 782-804 (RGLK…ALSN), 805-830 (LSYL…GFPR), and 851-874 (LPFL…QIEC).

The protein belongs to the disease resistance NB-LRR family. As to quaternary structure, forms homodimer or heterodimer with RGA5 through its coiled coil (CC) domain. Expressed in leaves.

Its subcellular location is the cytoplasm. Its function is as follows. Disease resistance (R) protein. Resistance proteins guard the plant against pathogens that contain an appropriate avirulence protein via an indirect interaction with this avirulence protein. That triggers a defense system including the hypersensitive response, which restricts the pathogen growth. Contribution of RGA5 is required to recognize the effector avirulence proteins AVR-Pia and AVR1-CO39 from M.oryzae. Acts as a constitutively active cell death inducer that is repressed by RGA5. Immune response triggered by the RGA4-RGA5 -mediated recognition of AVR1-CO39 confers resistance to X.oryzae pathovars. The polypeptide is Disease resistance protein RGA4 (Oryza sativa subsp. japonica (Rice)).